The following is a 529-amino-acid chain: CTP synthase (529 aa).

The amidoligase domain stretch occupies residues 1–266 (MTKYIIVTGG…TKKIFNKLGL (266 aa)). Serine 13 is a CTP binding site. Serine 13 contributes to the UTP binding site. Residue 14–19 (SVGKGT) participates in ATP binding. Tyrosine 54 is an L-glutamine binding site. Aspartate 71 lines the ATP pocket. Residues aspartate 71 and glutamate 141 each contribute to the Mg(2+) site. CTP contacts are provided by residues 148–150 (DIE), 187–192 (KTKPLQ), and lysine 223. Residues 187–192 (KTKPLQ) and lysine 223 contribute to the UTP site. Residues 291–529 (KIALVGKYTK…FLNFLSVASA (239 aa)) form the Glutamine amidotransferase type-1 domain. Glycine 354 provides a ligand contact to L-glutamine. Cysteine 381 serves as the catalytic Nucleophile; for glutamine hydrolysis. L-glutamine is bound by residues 382–385 (FGMQ), glutamate 405, and arginine 462. Residues histidine 506 and glutamate 508 contribute to the active site.

This sequence belongs to the CTP synthase family. Homotetramer.

It carries out the reaction UTP + L-glutamine + ATP + H2O = CTP + L-glutamate + ADP + phosphate + 2 H(+). It catalyses the reaction L-glutamine + H2O = L-glutamate + NH4(+). The enzyme catalyses UTP + NH4(+) + ATP = CTP + ADP + phosphate + 2 H(+). The protein operates within pyrimidine metabolism; CTP biosynthesis via de novo pathway; CTP from UDP: step 2/2. Its activity is regulated as follows. Allosterically activated by GTP, when glutamine is the substrate; GTP has no effect on the reaction when ammonia is the substrate. The allosteric effector GTP functions by stabilizing the protein conformation that binds the tetrahedral intermediate(s) formed during glutamine hydrolysis. Inhibited by the product CTP, via allosteric rather than competitive inhibition. Its function is as follows. Catalyzes the ATP-dependent amination of UTP to CTP with either L-glutamine or ammonia as the source of nitrogen. Regulates intracellular CTP levels through interactions with the four ribonucleotide triphosphates. In Sulfolobus acidocaldarius (strain ATCC 33909 / DSM 639 / JCM 8929 / NBRC 15157 / NCIMB 11770), this protein is CTP synthase.